We begin with the raw amino-acid sequence, 477 residues long: Cytochrome b mRNA maturase bI3 (477 aa).

The interval 1 to 163 (MRLLKSHPLL…IPWIGQDIVE (163 aa)) is cytochrome b. The next 5 helical transmembrane spans lie at 32 to 52 (FGSLLACCLIIQIVTGVTLAM), 86 to 106 (ASAFFFLVYLHIGRGMYYGSY), 113 to 133 (VWAIGTVILILMMATAFLGYV), 142 to 162 (WGATVITNLISAIPWIGQDIV), and 166 to 186 (IITLIINLSFIAILFSIVVVY). The segment at 164–477 (SKIITLIINL…YSTLNYPDAK (314 aa)) is maturase.

This sequence in the N-terminal section; belongs to the cytochrome b family. The protein in the C-terminal section; belongs to the LAGLIDADG endonuclease family.

Its subcellular location is the mitochondrion inner membrane. Mitochondrial mRNA maturase required for splicing of intron 3 of the cytochrome b (cob) gene, containing its own coding sequence. The chain is Cytochrome b mRNA maturase bI3 (bI3) from Neurospora crassa (strain ATCC 24698 / 74-OR23-1A / CBS 708.71 / DSM 1257 / FGSC 987).